Consider the following 293-residue polypeptide: Vibriobactin-specific isochorismatase (293 aa).

In terms of domain architecture, Carrier spans 211–287 (KLTGLSLRTM…QWWQTIQANL (77 aa)). At Ser248 the chain carries O-(pantetheine 4'-phosphoryl)serine.

Belongs to the isochorismatase family. Pantetheine 4'-phosphate is required as a cofactor.

It carries out the reaction isochorismate + H2O = (2S,3S)-2,3-dihydroxy-2,3-dihydrobenzoate + pyruvate. The protein operates within siderophore biosynthesis; vibriobactin biosynthesis. Involved in the biosynthesis of the catechol siderophore vibriobactin. Vibriobactin is a chelating compound involved in transporting iron from the bacterial environment into the cell cytoplasm. The chain is Vibriobactin-specific isochorismatase (vibB) from Vibrio cholerae serotype O1 (strain ATCC 39541 / Classical Ogawa 395 / O395).